The chain runs to 492 residues: Bifunctional protein GlmU (492 aa).

Positions 1-241 (MIPENTGPAA…RWQVEGANDR (241 aa)) are pyrophosphorylase. UDP-N-acetyl-alpha-D-glucosamine contacts are provided by residues 14-17 (LAAG), lysine 28, glutamine 81, 86-87 (GT), 112-114 (YGD), glycine 151, glutamate 166, asparagine 181, and asparagine 239. Residue aspartate 114 participates in Mg(2+) binding. Position 239 (asparagine 239) interacts with Mg(2+). Residues 242 to 262 (VQLAALGAELNRRTVEAWMRA) form a linker region. The segment at 263 to 492 (GVTVVDPSTT…STPASTEEGK (230 aa)) is N-acetyltransferase. Arginine 344 and lysine 362 together coordinate UDP-N-acetyl-alpha-D-glucosamine. The active-site Proton acceptor is the histidine 374. 2 residues coordinate UDP-N-acetyl-alpha-D-glucosamine: tyrosine 377 and asparagine 388. Acetyl-CoA contacts are provided by residues 397–398 (NY), serine 416, and alanine 434. The disordered stretch occupies residues 460–492 (WVPANRPGSRSAELAQAAINNSSSTPASTEEGK). The span at 477 to 492 (AINNSSSTPASTEEGK) shows a compositional bias: polar residues.

The protein in the N-terminal section; belongs to the N-acetylglucosamine-1-phosphate uridyltransferase family. This sequence in the C-terminal section; belongs to the transferase hexapeptide repeat family. As to quaternary structure, homotrimer. Mg(2+) is required as a cofactor.

It is found in the cytoplasm. The enzyme catalyses alpha-D-glucosamine 1-phosphate + acetyl-CoA = N-acetyl-alpha-D-glucosamine 1-phosphate + CoA + H(+). It carries out the reaction N-acetyl-alpha-D-glucosamine 1-phosphate + UTP + H(+) = UDP-N-acetyl-alpha-D-glucosamine + diphosphate. It participates in nucleotide-sugar biosynthesis; UDP-N-acetyl-alpha-D-glucosamine biosynthesis; N-acetyl-alpha-D-glucosamine 1-phosphate from alpha-D-glucosamine 6-phosphate (route II): step 2/2. Its pathway is nucleotide-sugar biosynthesis; UDP-N-acetyl-alpha-D-glucosamine biosynthesis; UDP-N-acetyl-alpha-D-glucosamine from N-acetyl-alpha-D-glucosamine 1-phosphate: step 1/1. The protein operates within bacterial outer membrane biogenesis; LPS lipid A biosynthesis. Its function is as follows. Catalyzes the last two sequential reactions in the de novo biosynthetic pathway for UDP-N-acetylglucosamine (UDP-GlcNAc). The C-terminal domain catalyzes the transfer of acetyl group from acetyl coenzyme A to glucosamine-1-phosphate (GlcN-1-P) to produce N-acetylglucosamine-1-phosphate (GlcNAc-1-P), which is converted into UDP-GlcNAc by the transfer of uridine 5-monophosphate (from uridine 5-triphosphate), a reaction catalyzed by the N-terminal domain. The protein is Bifunctional protein GlmU of Pseudarthrobacter chlorophenolicus (strain ATCC 700700 / DSM 12829 / CIP 107037 / JCM 12360 / KCTC 9906 / NCIMB 13794 / A6) (Arthrobacter chlorophenolicus).